Here is a 469-residue protein sequence, read N- to C-terminus: Relaxin-3 receptor 1 (469 aa).

Residues 1–81 are Extracellular-facing; the sequence is MQMADAATIA…ESADTEARVR (81 aa). Residues Asn-36 and Asn-40 are each glycosylated (N-linked (GlcNAc...) asparagine). A helical transmembrane segment spans residues 82–102; the sequence is ILISVVYWVVCALGLAGNLLV. The Cytoplasmic portion of the chain corresponds to 103–119; that stretch reads LYLMKSMQGWRKSSINL. Residues 120–140 traverse the membrane as a helical segment; the sequence is FVTNLALTDFQFVLTLPFWAV. At 141–156 the chain is on the extracellular side; it reads ENALDFKWPFGKAMCK. Cysteines 155 and 247 form a disulfide. The chain crosses the membrane as a helical span at residues 157–177; the sequence is IVSMVTSMNMYASVFFLTAMS. Residues 178 to 215 lie on the Cytoplasmic side of the membrane; it reads VTRYHSVASALKSHRTRGHGRGDCCGRSLGDSCCFSAK. A helical transmembrane segment spans residues 216–236; sequence ALCVWIWALAALASLPSAIFS. The Extracellular segment spans residues 237–270; it reads TTVKVMGEELCLVRFPDKLLGRDRQFWLGLYHSQ. The helical transmembrane segment at 271–291 threads the bilayer; the sequence is KVLLGFVLPLGIIILCYLLLV. At 292 to 329 the chain is on the cytoplasmic side; it reads RFIADRRAAGTKGGAAVAGGRPTGASARRLSKVTKSVT. The helical transmembrane segment at 330–350 threads the bilayer; sequence IVVLSFFLCWLPNQALTTWSI. The Extracellular portion of the chain corresponds to 351–356; the sequence is LIKFNA. Residues 357–377 form a helical membrane-spanning segment; that stretch reads VPFSQEYFLCQVYAFPVSVCL. Residues 378–469 lie on the Cytoplasmic side of the membrane; that stretch reads AHSNSCLNPV…YDLLPSSSAY (92 aa).

Belongs to the G-protein coupled receptor 1 family. As to expression, expressed predominantly in brain regions. Highest expression in substantia nigra and pituitary, followed by hippocampus, spinal cord, amygdala, caudate nucleus and corpus callosum, quite low level in cerebellum. In peripheral tissues, relatively high levels in adrenal glands, low levels in pancreas, salivary gland, placenta, mammary gland and testis.

It is found in the cell membrane. In terms of biological role, receptor for RNL3/relaxin-3. Binding of the ligand inhibit cAMP accumulation. This Homo sapiens (Human) protein is Relaxin-3 receptor 1 (RXFP3).